The primary structure comprises 84 residues: Large ribosomal subunit protein bL27 (84 aa).

The tract at residues 1–24 (MAHKKGGGSSKNGRDSNSQRLGVK) is disordered.

The protein belongs to the bacterial ribosomal protein bL27 family.

This is Large ribosomal subunit protein bL27 from Leptospira borgpetersenii serovar Hardjo-bovis (strain JB197).